Consider the following 84-residue polypeptide: UPF0410 protein YmgE (84 aa).

Helical transmembrane passes span 1–21 (MGII…KLIM), 27–47 (GGFF…GWLA), and 58–78 (GFNL…LGVF).

Belongs to the UPF0410 family.

The protein resides in the cell inner membrane. This is UPF0410 protein YmgE (ymgE) from Escherichia coli O127:H6 (strain E2348/69 / EPEC).